Reading from the N-terminus, the 239-residue chain is Serine protease SplF (239 aa).

A signal peptide spans 1–36 (MNKNIIIKSIAALTILTSITGVGTTVVDGIQQTAKA). Residues His75, Asp114, and Ser192 each act as charge relay system in the active site.

This sequence belongs to the peptidase S1B family.

The protein localises to the secreted. This Staphylococcus aureus (strain JH9) protein is Serine protease SplF (splF).